The sequence spans 380 residues: G-protein coupled receptor (380 aa).

Transmembrane regions (helical) follow at residues 26-46 (VISI…YLGI), 60-80 (LVCC…PLWV), 97-117 (FAGM…VIVT), 145-165 (VTIL…ETSI), 184-204 (AALG…HIIL), 220-240 (ILMW…SLSA), and 275-295 (VAML…VPLI). A disulfide bridge connects residues Cys-95 and Cys-170. The interval 328-380 (SQSKLLRGEENPNYDYSPKSVRIKPLKSPGGGDNSSLKDEGYDEESQNGFSIG) is disordered.

The protein belongs to the G-protein coupled receptor 1 family.

The protein localises to the host membrane. This chain is G-protein coupled receptor, found in Elephas maximus (Indian elephant).